The primary structure comprises 344 residues: Chorismatase (344 aa).

The substrate site is built by Tyr155, Arg162, Tyr215, and Arg228. The Proton acceptor role is filled by Glu338.

Belongs to the FkbO/Hyg5 family. As to quaternary structure, monomer.

It catalyses the reaction chorismate + H2O = (3R,4R)-3,4-dihydroxy-3,4-dihydrobenzoate + pyruvate. Its activity is regulated as follows. Competitively inhibited by 3-(2-carboxyethyl)benzoate. Involved in the biosynthesis of the macrocyclic amino acid-linked polyketides FK506 and FK520 which are potent immunosuppressants that prevent T-cell proliferation through initial binding to the immunophilin FKBP12. Catalyzes the hydrolysis of chorismate via a 1,4-conjugate elimination of water to yield (4R,5R)-4,5-dihydroxycyclohexa-1,5-dienecarboxylic acid (DCDC). In Streptomyces hygroscopicus, this protein is Chorismatase (fkbO).